Consider the following 409-residue polypeptide: Phospholipase ABHD3 (409 aa).

Residues 26 to 46 form a helical; Signal-anchor for type II membrane protein membrane-spanning segment; it reads GFFGSGVGLSLILGFSVAYAF. The region spanning 140 to 233 is the AB hydrolase-1 domain; it reads PTILLLPGLT…MLLLNYLGKI (94 aa). Residues Ser220, Asp346, and His375 each act as charge relay system in the active site.

Belongs to the AB hydrolase superfamily. AB hydrolase 4 family.

The protein resides in the membrane. It catalyses the reaction a 1,2-diacyl-sn-glycero-3-phosphocholine + H2O = a 1-acyl-sn-glycero-3-phosphocholine + a fatty acid + H(+). It carries out the reaction a 1,2-diacyl-sn-glycero-3-phosphocholine + H2O = a 2-acyl-sn-glycero-3-phosphocholine + a fatty acid + H(+). The catalysed reaction is 1-tetradecanoyl-2-(9Z,12Z-octadecadienoyl)-sn-glycero-3-phosphocholine + H2O = 2-(9Z,12Z-octadecadienoyl)-sn-glycero-3-phosphocholine + tetradecanoate + H(+). The enzyme catalyses 1-tetradecanoyl-2-(9Z,12Z-octadecadienoyl)-sn-glycero-3-phosphocholine + H2O = 1-tetradecanoyl-sn-glycero-3-phosphocholine + (9Z,12Z)-octadecadienoate + H(+). It catalyses the reaction 1-tetradecanoyl-2-(5Z,8Z,11Z,14Z-eicosatetraenoyl)-sn-glycero-3-phosphocholine + H2O = 2-(5Z,8Z,11Z,14Z)-eicosatetraenoyl-sn-glycero-3-phosphocholine + tetradecanoate + H(+). It carries out the reaction 1-tetradecanoyl-2-(4Z,7Z,10Z,13Z,16Z,19Z-docosahexaenoyl)-sn-glycero-3-phosphocholine + H2O = 2-(4Z,7Z,10Z,13Z,16Z,19Z-docosahexaenoyl)-sn-glycero-3-phosphocholine + tetradecanoate + H(+). The catalysed reaction is 1,2-ditetradecanoyl-sn-glycero-3-phosphocholine + H2O = 2-tetradecanoyl-sn-glycero-3-phosphocholine + tetradecanoate + H(+). The enzyme catalyses 1-octadecanoyl-2-acetyl-sn-glycero-3-phosphocholine + H2O = 1-octadecanoyl-sn-glycero-3-phosphocholine + acetate + H(+). It catalyses the reaction 1,2-ditetradecanoyl-sn-glycero-3-phosphocholine + H2O = 1-tetradecanoyl-sn-glycero-3-phosphocholine + tetradecanoate + H(+). It carries out the reaction 1-octadecanoyl-2-pentanoyl-sn-glycero-3-phosphocholine + H2O = pentanoate + 1-octadecanoyl-sn-glycero-3-phosphocholine + H(+). The catalysed reaction is 1-octadecanoyl-2-hexanoyl-sn-glycero-3-phosphocholine + H2O = hexanoate + 1-octadecanoyl-sn-glycero-3-phosphocholine + H(+). The enzyme catalyses 1-octadecanoyl-2-octanoyl-sn-glycero-3-phosphocholine + H2O = 1-octadecanoyl-sn-glycero-3-phosphocholine + octanoate + H(+). It catalyses the reaction 1-octadecanoyl-2-nonanoyl-sn-glycero-3-phosphocholine + H2O = nonanoate + 1-octadecanoyl-sn-glycero-3-phosphocholine + H(+). It carries out the reaction 1-O-hexadecyl-2-nonadioyl-sn-glycero-3-phosphocholine + H2O = nonanedioate + 1-O-hexadecyl-sn-glycero-3-phosphocholine + H(+). The catalysed reaction is 1-hexadecanoyl-2-nonadioyl-sn-glycero-3-phosphocholine + H2O = nonanedioate + 1-hexadecanoyl-sn-glycero-3-phosphocholine + H(+). The enzyme catalyses 1-hexadecanoyl-2-(9-oxononanoyl)-sn-glycero-3-phosphocholine + H2O = 9-oxononanoate + 1-hexadecanoyl-sn-glycero-3-phosphocholine + H(+). It catalyses the reaction 1-hexadecanoyl-2-(5-oxopentanoyl)-sn-glycero-3-phosphocholine + H2O = 5-oxopentanoate + 1-hexadecanoyl-sn-glycero-3-phosphocholine + H(+). It carries out the reaction 1-hexadecanoyl-2-glutaroyl-sn-glycero-3-phosphocholine + H2O = glutarate + 1-hexadecanoyl-sn-glycero-3-phosphocholine + H(+). The catalysed reaction is 1-O-hexadecyl-2-acetyl-sn-glycero-3-phosphocholine + H2O = 1-O-hexadecyl-sn-glycero-3-phosphocholine + acetate + H(+). Functionally, phospholipase that may play a role in phospholipids remodeling. May selectively cleave myristate (C14)-containing phosphatidylcholines through its predominant phospholipase 1 activity, cleaving preferentially acyl groups in sn1 position. In parallel, may have a minor phospholipase 2 activity acting on acyl groups in position sn2. In addition to (C14)-containing phosphatidylcholines, may also act on other medium-chain-containing and oxidatively truncated phospholipids. In Homo sapiens (Human), this protein is Phospholipase ABHD3.